The following is a 275-amino-acid chain: Myoblast determination protein 1 homolog (275 aa).

Residues 84-135 (DRRKAATMRERRRLSKVNDAFETLKRCTSTNPNQRLPKVEILRNAISYIESL) form the bHLH domain. Residues 234-275 (EGHEESPCSPHEGSVLSDTGTTAPSPTSCPQQQAQETIYQVL) are disordered. Positions 249–275 (LSDTGTTAPSPTSCPQQQAQETIYQVL) are enriched in polar residues.

As to quaternary structure, efficient DNA binding requires dimerization with another bHLH protein. As to expression, from mid-gastrula to just before somite formation, expressed in cells adjacent to axial mesoderm. Subsequently, during the anterior-to-posterior wave of somite formation and maturation, expressed within particular regions of each somite. Expressed in both muscle and non-muscle cells.

The protein resides in the nucleus. In terms of biological role, may act as a transcriptional activator that promotes transcription of muscle-specific target genes and plays a role in muscle differentiation. This is Myoblast determination protein 1 homolog (myod1) from Danio rerio (Zebrafish).